Here is a 159-residue protein sequence, read N- to C-terminus: Sperm acrosome-associated protein 5 (159 aa).

The signal sequence occupies residues 1–21 (MKAWGTVVVTLATLMVVTVDA). The region spanning 22–150 (KIYERCELAA…SEWLKGCDMH (129 aa)) is the C-type lysozyme domain. 4 disulfides stabilise this stretch: Cys27/Cys147, Cys51/Cys135, Cys85/Cys100, and Cys96/Cys114. Glu56 is an active-site residue.

This sequence belongs to the glycosyl hydrolase 22 family.

It is found in the secreted. The catalysed reaction is Hydrolysis of (1-&gt;4)-beta-linkages between N-acetylmuramic acid and N-acetyl-D-glucosamine residues in a peptidoglycan and between N-acetyl-D-glucosamine residues in chitodextrins.. The polypeptide is Sperm acrosome-associated protein 5 (SPACA5) (Homo sapiens (Human)).